Consider the following 387-residue polypeptide: Succinate--CoA ligase [ADP-forming] subunit beta (387 aa).

In terms of domain architecture, ATP-grasp spans 9-236; it reads KELFAKHNVP…KDATDPLELK (228 aa). ATP contacts are provided by residues K45, 52-54, S94, and E99; that span reads GRG. Positions 191 and 205 each coordinate Mg(2+). Residues N256 and 318 to 320 each bind substrate; that span reads GIT.

This sequence belongs to the succinate/malate CoA ligase beta subunit family. Heterotetramer of two alpha and two beta subunits. Requires Mg(2+) as cofactor.

It carries out the reaction succinate + ATP + CoA = succinyl-CoA + ADP + phosphate. It catalyses the reaction GTP + succinate + CoA = succinyl-CoA + GDP + phosphate. It participates in carbohydrate metabolism; tricarboxylic acid cycle; succinate from succinyl-CoA (ligase route): step 1/1. Succinyl-CoA synthetase functions in the citric acid cycle (TCA), coupling the hydrolysis of succinyl-CoA to the synthesis of either ATP or GTP and thus represents the only step of substrate-level phosphorylation in the TCA. The beta subunit provides nucleotide specificity of the enzyme and binds the substrate succinate, while the binding sites for coenzyme A and phosphate are found in the alpha subunit. The sequence is that of Succinate--CoA ligase [ADP-forming] subunit beta from Mycolicibacterium gilvum (strain PYR-GCK) (Mycobacterium gilvum (strain PYR-GCK)).